The primary structure comprises 309 residues: UDP-N-acetylenolpyruvoylglucosamine reductase (309 aa).

Residues 34–198 (RVGGPAEVMF…VRARLHARPG (165 aa)) enclose the FAD-binding PCMH-type domain. Arg178 is a catalytic residue. Residue Ser227 is the Proton donor of the active site. The active site involves Glu297.

This sequence belongs to the MurB family. It depends on FAD as a cofactor.

It localises to the cytoplasm. The catalysed reaction is UDP-N-acetyl-alpha-D-muramate + NADP(+) = UDP-N-acetyl-3-O-(1-carboxyvinyl)-alpha-D-glucosamine + NADPH + H(+). Its pathway is cell wall biogenesis; peptidoglycan biosynthesis. Its function is as follows. Cell wall formation. In Acidiphilium cryptum (strain JF-5), this protein is UDP-N-acetylenolpyruvoylglucosamine reductase.